A 308-amino-acid polypeptide reads, in one-letter code: UPF0282 protein M164_2122 (308 aa).

Belongs to the UPF0282 family.

This chain is UPF0282 protein M164_2122, found in Saccharolobus islandicus (strain M.16.4 / Kamchatka #3) (Sulfolobus islandicus).